The sequence spans 217 residues: Chloramphenicol acetyltransferase (217 aa).

His193 functions as the Proton acceptor in the catalytic mechanism.

Belongs to the chloramphenicol acetyltransferase family. Homotrimer.

It catalyses the reaction chloramphenicol + acetyl-CoA = chloramphenicol 3-acetate + CoA. This enzyme is an effector of chloramphenicol resistance in bacteria. This is Chloramphenicol acetyltransferase (cat) from Proteus mirabilis.